Reading from the N-terminus, the 609-residue chain is Membrane-bound O-acyltransferase GUP2 (609 aa).

The first 18 residues, methionine 1–alanine 18, serve as a signal peptide directing secretion. Residues leucine 19–arginine 75 are Lumenal-facing. The chain crosses the membrane as a helical span at residues leucine 76–serine 96. The Cytoplasmic portion of the chain corresponds to serine 97–asparagine 133. Residues phenylalanine 134 to phenylalanine 154 traverse the membrane as a helical segment. Topologically, residues serine 155–valine 169 are lumenal. Residues phenylalanine 170 to phenylalanine 190 form a helical membrane-spanning segment. The Cytoplasmic segment spans residues threonine 191–arginine 200. A helical membrane pass occupies residues leucine 201 to methionine 221. Topologically, residues lysine 222–asparagine 324 are lumenal. The chain crosses the membrane as a helical span at residues phenylalanine 325–threonine 345. The Cytoplasmic portion of the chain corresponds to phenylalanine 346–lysine 371. The chain crosses the membrane as a helical span at residues valine 372–alanine 392. The Lumenal portion of the chain corresponds to arginine 393 to alanine 406. Residues methionine 407–phenylalanine 427 traverse the membrane as a helical segment. Residues arginine 428 to proline 474 are Cytoplasmic-facing. A helical membrane pass occupies residues phenylalanine 475 to tryptophan 495. Histidine 496 is an active-site residue. Over histidine 496 to valine 502 the chain is Lumenal. A helical membrane pass occupies residues leucine 503–phenylalanine 523. The Cytoplasmic segment spans residues serine 524–arginine 533. Residues phenylalanine 534–glycine 554 form a helical membrane-spanning segment. Over phenylalanine 555–serine 575 the chain is Lumenal. A helical membrane pass occupies residues proline 576–isoleucine 596. The Cytoplasmic segment spans residues arginine 597–cysteine 609.

The protein belongs to the membrane-bound acyltransferase family.

The protein localises to the endoplasmic reticulum membrane. In terms of biological role, probable membrane-bound O-acyltransferase. Together with GUP1, has an influence on the chemical composition of the yeast extracellular matrix (yECM) in yeast multicellular aggregates, such as biofilms and colonies. The sequence is that of Membrane-bound O-acyltransferase GUP2 (GUP2) from Saccharomyces cerevisiae (strain ATCC 204508 / S288c) (Baker's yeast).